A 603-amino-acid chain; its full sequence is Variable flagella 3 (603 aa).

Residues 169 to 289 are a coiled coil; it reads GGEVSAELRR…TEDLEARDRR (121 aa). Basic and acidic residues predominate over residues 288 to 297; it reads RRMNSTDRIR. 2 disordered regions span residues 288–526 and 539–564; these read RRMN…PARA and AGRGGSLQGDDASSAHGEHMSQSSKS. The segment covering 337–348 has biased composition (low complexity); that stretch reads SRSNSRGRGTSS. The span at 364-380 shows a compositional bias: basic and acidic residues; that stretch reads PRFDPTEYVRQRKERES. The span at 397–406 shows a compositional bias: polar residues; sequence AGTSRASSVV. Gly residues predominate over residues 486–510; that stretch reads GASGGGAGGWSKFPGGGGGGVGGSG. Polar residues predominate over residues 511 to 520; the sequence is QRISSNSPRS.

It belongs to the CCDC61 family.

Its subcellular location is the cytoplasm. The protein resides in the cytoskeleton. The protein localises to the flagellum basal body. Functionally, required for normal flagella and striated fiber formation. This Chlamydomonas reinhardtii (Chlamydomonas smithii) protein is Variable flagella 3.